We begin with the raw amino-acid sequence, 206 residues long: Ribosomal RNA large subunit methyltransferase E (206 aa).

S-adenosyl-L-methionine is bound by residues Gly-60, Trp-62, Asp-80, Asp-96, and Asp-121. Lys-161 (proton acceptor) is an active-site residue.

It belongs to the class I-like SAM-binding methyltransferase superfamily. RNA methyltransferase RlmE family.

The protein resides in the cytoplasm. The catalysed reaction is uridine(2552) in 23S rRNA + S-adenosyl-L-methionine = 2'-O-methyluridine(2552) in 23S rRNA + S-adenosyl-L-homocysteine + H(+). Functionally, specifically methylates the uridine in position 2552 of 23S rRNA at the 2'-O position of the ribose in the fully assembled 50S ribosomal subunit. The sequence is that of Ribosomal RNA large subunit methyltransferase E from Legionella pneumophila (strain Paris).